The primary structure comprises 122 residues: MKSGFGEGAYFITRSVYRDQFREKLGFDPFPGTLNIEVGDPEIVERIREGAPVIQGGGGFGDVLYVKALLNGVVEGAILFPLKTHHRQGCLEFVAPVNLRKTLKLRDGDTVSLDIDTSEIQE.

A CDP-binding site is contributed by 4 to 9 (GFGEGA). Positions 33 and 35 each coordinate Mg(2+). Residues threonine 84 and glutamate 92 each coordinate FMN. 97 to 100 (VNLR) is a binding site for CDP.

This sequence belongs to the archaeal riboflavin kinase family. Mg(2+) is required as a cofactor.

It carries out the reaction riboflavin + CTP = CDP + FMN + H(+). Its pathway is cofactor biosynthesis; FMN biosynthesis; FMN from riboflavin (CTP route): step 1/1. In terms of biological role, catalyzes the CTP-dependent phosphorylation of riboflavin (vitamin B2) to form flavin mononucleotide (FMN). The polypeptide is Riboflavin kinase (Methanothermobacter thermautotrophicus (strain ATCC 29096 / DSM 1053 / JCM 10044 / NBRC 100330 / Delta H) (Methanobacterium thermoautotrophicum)).